Reading from the N-terminus, the 86-residue chain is MQDELFETEKIPPKNTKNAKNAPKKSFEEHVHSLEQAIDRLNDPNLSLKDGMDLYKTAMQELFLAQKLLENAYLEHEKLQTPDKKA.

The interval 1 to 27 (MQDELFETEKIPPKNTKNAKNAPKKSF) is disordered.

This sequence belongs to the XseB family. Heterooligomer composed of large and small subunits.

It is found in the cytoplasm. The enzyme catalyses Exonucleolytic cleavage in either 5'- to 3'- or 3'- to 5'-direction to yield nucleoside 5'-phosphates.. In terms of biological role, bidirectionally degrades single-stranded DNA into large acid-insoluble oligonucleotides, which are then degraded further into small acid-soluble oligonucleotides. The protein is Exodeoxyribonuclease 7 small subunit of Helicobacter pylori (strain G27).